The chain runs to 64 residues: U-myrmeciitoxin(01)-Mg4b (64 aa).

An N-terminal signal peptide occupies residues 1–25; it reads MGKIFFFVLMIAIIGSTFLIEEALG.

This sequence belongs to the ant myrmeciitoxin-01 family. Homodimer; disulfide-linked. Post-translationally, contains 2 intrachain disulfide bonds (per chain) and 1 interchain disulfide bond. As to expression, expressed by the venom gland.

The protein resides in the secreted. In terms of biological role, may have antimicrobial properties, like most ant linear peptides. The polypeptide is U-myrmeciitoxin(01)-Mg4b (Myrmecia gulosa (Red bulldog ant)).